Consider the following 912-residue polypeptide: Translation initiation factor IF-2 (912 aa).

The tract at residues 185-204 (NATRPKRKTKEEKQKEREER) is disordered. Over residues 193 to 204 (TKEEKQKEREER) the composition is skewed to basic and acidic residues. Positions 411–581 (LRPPIVTIMG…LLEAELLDLK (171 aa)) constitute a tr-type G domain. The segment at 420-427 (GHVDHGKT) is G1. Residue 420–427 (GHVDHGKT) participates in GTP binding. The segment at 445–449 (GITQH) is G2. The tract at residues 467-470 (DTPG) is G3. Residues 467-471 (DTPGH) and 521-524 (NKID) contribute to the GTP site. A G4 region spans residues 521-524 (NKID). Residues 557 to 559 (SAK) form a G5 region.

Belongs to the TRAFAC class translation factor GTPase superfamily. Classic translation factor GTPase family. IF-2 subfamily.

The protein resides in the cytoplasm. One of the essential components for the initiation of protein synthesis. Protects formylmethionyl-tRNA from spontaneous hydrolysis and promotes its binding to the 30S ribosomal subunits. Also involved in the hydrolysis of GTP during the formation of the 70S ribosomal complex. The polypeptide is Translation initiation factor IF-2 (Azobacteroides pseudotrichonymphae genomovar. CFP2).